The chain runs to 160 residues: Cyclic pyranopterin monophosphate synthase (160 aa).

Substrate-binding positions include 76-78 and 114-115; these read LCH and ME. Asp-129 is a catalytic residue.

Belongs to the MoaC family. Homohexamer; trimer of dimers.

The enzyme catalyses (8S)-3',8-cyclo-7,8-dihydroguanosine 5'-triphosphate = cyclic pyranopterin phosphate + diphosphate. The protein operates within cofactor biosynthesis; molybdopterin biosynthesis. Its function is as follows. Catalyzes the conversion of (8S)-3',8-cyclo-7,8-dihydroguanosine 5'-triphosphate to cyclic pyranopterin monophosphate (cPMP). This Vibrio cholerae serotype O1 (strain ATCC 39541 / Classical Ogawa 395 / O395) protein is Cyclic pyranopterin monophosphate synthase.